Consider the following 112-residue polypeptide: Large ribosomal subunit protein uL22 (112 aa).

This sequence belongs to the universal ribosomal protein uL22 family. Part of the 50S ribosomal subunit.

Functionally, this protein binds specifically to 23S rRNA; its binding is stimulated by other ribosomal proteins, e.g. L4, L17, and L20. It is important during the early stages of 50S assembly. It makes multiple contacts with different domains of the 23S rRNA in the assembled 50S subunit and ribosome. Its function is as follows. The globular domain of the protein is located near the polypeptide exit tunnel on the outside of the subunit, while an extended beta-hairpin is found that lines the wall of the exit tunnel in the center of the 70S ribosome. The protein is Large ribosomal subunit protein uL22 of Anaplasma phagocytophilum (strain HZ).